Here is a 256-residue protein sequence, read N- to C-terminus: Small ribosomal subunit protein eS1 (256 aa).

Residue alanine 2 is modified to N-acetylalanine; partial.

The protein belongs to the eukaryotic ribosomal protein eS1 family. As to quaternary structure, component of the small ribosomal subunit. Mature ribosomes consist of a small (40S) and a large (60S) subunit. The 40S subunit contains about 33 different proteins and 1 molecule of RNA (18S). The 60S subunit contains about 49 different proteins and 3 molecules of RNA (25S, 5.8S and 5S).

The protein localises to the cytoplasm. The protein is Small ribosomal subunit protein eS1 of Lachancea thermotolerans (strain ATCC 56472 / CBS 6340 / NRRL Y-8284) (Yeast).